The primary structure comprises 410 residues: Histone-lysine N-methyltransferase SUV39H2 (410 aa).

Positions 47-105 constitute a Chromo domain; sequence YEVEYLCDYKVVKDMEYYLVKWKGWPDSTNTWEPLQNLKCPLLLQQFSNDKHNYLSQVK. One can recognise a Pre-SET domain in the interval 189–247; it reads FGCSCTDCFFQKCCPAEAGVLLAYNKNQQIKIPPGTPIYECNSRCQCGPDCPNRIVQKG. Zn(2+) is bound by residues C191, C193, C196, C201, C202, C229, C233, C235, and C239. Residues 250 to 373 enclose the SET domain; the sequence is YSLCIFRTSN…AGEELTFDYQ (124 aa). Residues 261–263, Y304, and 330–331 each bind S-adenosyl-L-methionine; these read RGW and NH. Residue C333 coordinates Zn(2+). Phosphoserine is present on residues S381, S384, and S388. The region spanning 394 to 410 is the Post-SET domain; that stretch reads VRTVCKCGAVTCRGYLN. Residues C398, C400, and C405 each contribute to the Zn(2+) site.

This sequence belongs to the class V-like SAM-binding methyltransferase superfamily. Histone-lysine methyltransferase family. Suvar3-9 subfamily. In terms of assembly, interacts with SMAD5. The large PER complex involved in the histone methylation is composed of at least PER2, CBX3, TRIM28, SUV39H1 and/or SUV39H2; CBX3 mediates the formation of the complex. Ubiquitinated by the DCX(DCAF13) E3 ubiquitin ligase complex, leading to its degradation.

It localises to the nucleus. Its subcellular location is the chromosome. The protein resides in the centromere. The catalysed reaction is L-lysyl(9)-[histone H3] + 3 S-adenosyl-L-methionine = N(6),N(6),N(6)-trimethyl-L-lysyl(9)-[histone H3] + 3 S-adenosyl-L-homocysteine + 3 H(+). In terms of biological role, histone methyltransferase that specifically trimethylates 'Lys-9' of histone H3 using monomethylated H3 'Lys-9' as substrate. H3 'Lys-9' trimethylation represents a specific tag for epigenetic transcriptional repression by recruiting HP1 (CBX1, CBX3 and/or CBX5) proteins to methylated histones. Mainly functions in heterochromatin regions, thereby playing a central role in the establishment of constitutive heterochromatin at pericentric and telomere regions. H3 'Lys-9' trimethylation is also required to direct DNA methylation at pericentric repeats. SUV39H1 is targeted to histone H3 via its interaction with RB1 and is involved in many processes, such as cell cycle regulation, transcriptional repression and regulation of telomere length. May participate in regulation of higher-order chromatin organization during spermatogenesis. Recruited by the large PER complex to the E-box elements of the circadian target genes such as PER2 itself or PER1, contributes to the conversion of local chromatin to a heterochromatin-like repressive state through H3 'Lys-9' trimethylation. This chain is Histone-lysine N-methyltransferase SUV39H2 (SUV39H2), found in Macaca fascicularis (Crab-eating macaque).